A 462-amino-acid polypeptide reads, in one-letter code: MSKLWGGRFTEEAEAWVEEFGASISFDQQLVNQDINGSIAHVTMLAKQGIVTKEEAEKIKIGLQYLLEEAKQNKLNFSVEAEDIHLNIEKMLIEKIGEVGGKLHTGRSRNDQVATDMHLYLKEKVEHIMKATKQLQTVLVHQAENNIETIMPGYTHLQRAQPISFAHHILAYFWMLERDVNRYEDSLKRINISPLGAGALAGTTFPIDREYSAELLGFNGIYENSLDAVSDRDFILEFLSNSSILMMHLSRFCEELILWSSQEFQFIEMSDQYATGSSIMPQKKNPDMAELIRGKTGRVYGNLFSLLTVMKGLPLAYNKDLQEDKEGMFDTVKTVEGCLHIMAGMLETMTVNKEKMGQAVTQDFSNATEIADYLASKGLPFRQAHEIVGKLVLHCTQKGIYLVDVPLETYKEMSSLFEEDLYEVLSPYAAVKRRNSAGGTGFEQIEKALEKAKGLTKEAIKN.

The protein belongs to the lyase 1 family. Argininosuccinate lyase subfamily.

It localises to the cytoplasm. The enzyme catalyses 2-(N(omega)-L-arginino)succinate = fumarate + L-arginine. It participates in amino-acid biosynthesis; L-arginine biosynthesis; L-arginine from L-ornithine and carbamoyl phosphate: step 3/3. This Bacillus cereus (strain ZK / E33L) protein is Argininosuccinate lyase.